The following is a 338-amino-acid chain: tRNA N6-adenosine threonylcarbamoyltransferase (338 aa).

His-109 and His-113 together coordinate Fe cation. Substrate-binding positions include 132–136 (AISGA), Asp-165, Gly-178, and Asn-277. Asp-302 contacts Fe cation.

This sequence belongs to the KAE1 / TsaD family. The cofactor is Fe(2+).

The protein localises to the cytoplasm. It carries out the reaction L-threonylcarbamoyladenylate + adenosine(37) in tRNA = N(6)-L-threonylcarbamoyladenosine(37) in tRNA + AMP + H(+). Its function is as follows. Required for the formation of a threonylcarbamoyl group on adenosine at position 37 (t(6)A37) in tRNAs that read codons beginning with adenine. Is involved in the transfer of the threonylcarbamoyl moiety of threonylcarbamoyl-AMP (TC-AMP) to the N6 group of A37, together with TsaE and TsaB. TsaD likely plays a direct catalytic role in this reaction. This chain is tRNA N6-adenosine threonylcarbamoyltransferase, found in Chlamydia trachomatis serovar A (strain ATCC VR-571B / DSM 19440 / HAR-13).